The sequence spans 473 residues: H(+)/Cl(-) exchange transporter ClcA (473 aa).

Residues 1–32 (MKTDTSTFLAQQIVRLRRRDQIRRLMQRDKTP) lie on the Cytoplasmic side of the membrane. A helical membrane pass occupies residues 33–69 (LAILLMAAVVGTLTGLVGVAFEKAVSWVQNMRIGALV). The Periplasmic segment spans residues 70-76 (QVADHAF). Residues 77–100 (LLWPLAFILSALLAMVGYFLVRKF) form a helical membrane-spanning segment. The Selectivity filter part_1 signature appears at 106-110 (GSGIP). Residue S107 coordinates chloride. An intramembrane region (helical) is located at residues 109-116 (IPEIEGAL). The Cytoplasmic portion of the chain corresponds to 117-123 (EELRPVR). 2 helical membrane-spanning segments follow: residues 124–141 (WWRVLPVKFIGGMGTLGA) and 148–166 (EGPTVQIGGNLGRMVLDVF). The short motif at 146–150 (GREGP) is the Selectivity filter part_2 element. The Cytoplasmic portion of the chain corresponds to 167–176 (RMRSAEARHT). 2 intramembrane regions (helical) span residues 177-189 (LLATGAAAGLSAA) and 193-201 (PLAGILFII). At 202 to 214 (EEMRPQFRYNLIS) the chain is on the cytoplasmic side. A helical membrane pass occupies residues 215–232 (IKAVFTGVIMSSIVFRIF). The Periplasmic portion of the chain corresponds to 233–252 (NGEAPIIEVGKLSDAPVNTL). The helical transmembrane segment at 253–281 (WLYLILGIIFGCVGPVFNSLVLRTQDMFQ) threads the bilayer. Residues 282-287 (RFHGGE) lie on the Cytoplasmic side of the membrane. Residues 288-309 (IKKWVLMGGAIGGLCGILGLIE) traverse the membrane as a helical segment. The Periplasmic segment spans residues 310–329 (PEAAGGGFNLIPIAAAGNFS). 2 consecutive transmembrane segments (helical) span residues 330-349 (VGLLLFIFITRVVTTLLCFS) and 355-376 (GIFAPMLALGTLLGTAFGMAAA). A Selectivity filter part_3 motif is present at residues 355-359 (GIFAP). Positions 356 and 357 each coordinate chloride. Over 377 to 386 (VLFPQYHLEA) the chain is Periplasmic. Residues 387 to 401 (GTFAIAGMGALMAAS) constitute an intramembrane region (helical). Residues 402 to 404 (VRA) constitute an intramembrane region (note=Loop between two helices). An intramembrane region (helical) is located at residues 405-416 (PLTGIVLVLEMT). Positions 417–421 (DNYQL) form an intramembrane region, note=Loop between two helices. A helical membrane pass occupies residues 422–438 (ILPMIITCLGATLLAQF). Residues 439 to 473 (LGGKPLYSTILARTLAKQDAEQAAKNQNAPAGENT) lie on the Cytoplasmic side of the membrane. Y445 contributes to the chloride binding site.

This sequence belongs to the chloride channel (TC 2.A.49) family. ClcA subfamily. Homodimer.

The protein resides in the cell inner membrane. The enzyme catalyses 2 chloride(in) + H(+)(out) = 2 chloride(out) + H(+)(in). Its function is as follows. Proton-coupled chloride transporter. Functions as antiport system and exchanges two chloride ions for 1 proton. Probably acts as an electrical shunt for an outwardly-directed proton pump that is linked to amino acid decarboxylation, as part of the extreme acid resistance (XAR) response. This Salmonella newport (strain SL254) protein is H(+)/Cl(-) exchange transporter ClcA.